A 529-amino-acid chain; its full sequence is Ectonucleoside triphosphate diphosphohydrolase 3 (529 aa).

At 1 to 22 (MFTVLTRQPCEQAGLKALYRTP) the chain is on the cytoplasmic side. The helical transmembrane segment at 23-43 (TIIALVVLLVSIVVLVSITVI) threads the bilayer. The Extracellular segment spans residues 44 to 485 (QIHKQEVLPP…PLIRLPIEPP (442 aa)). Asn81 carries an N-linked (GlcNAc...) asparagine glycan. Cys92 and Cys116 are oxidised to a cystine. N-linked (GlcNAc...) asparagine glycosylation occurs at Asn149. The Proton acceptor role is filled by Glu182. 222-226 (GASTQ) contacts ATP. The N-linked (GlcNAc...) asparagine glycan is linked to Asn238. 3 disulfides stabilise this stretch: Cys261–Cys308, Cys289–Cys334, and Cys347–Cys353. N-linked (GlcNAc...) asparagine glycosylation is found at Asn381, Asn392, Asn402, and Asn454. An intrachain disulfide couples Cys399 to Cys422. Residues 486–506 (VFVGTLAFFTAAALLCLAFLA) form a helical membrane-spanning segment. At 507 to 529 (YLCSATRRKRHSEHAFDHAVDSD) the chain is on the cytoplasmic side.

It belongs to the GDA1/CD39 NTPase family. The cofactor is Ca(2+). Mg(2+) serves as cofactor. In terms of tissue distribution, expressed in adult brain, pancreas, spleen and prostate. Moderate or low expression is seen in most tissues. Not expressed in liver and peripheral blood leukocytes.

It localises to the cell membrane. The catalysed reaction is a ribonucleoside 5'-triphosphate + 2 H2O = a ribonucleoside 5'-phosphate + 2 phosphate + 2 H(+). In terms of biological role, has a threefold preference for the hydrolysis of ATP over ADP. This is Ectonucleoside triphosphate diphosphohydrolase 3 (ENTPD3) from Homo sapiens (Human).